A 289-amino-acid chain; its full sequence is uncharacterized protein (289 aa).

The span at 1–20 shows a compositional bias: basic and acidic residues; the sequence is MNPMDRQTEGQEPQHQDRQP. The segment at 1-39 is disordered; sequence MNPMDRQTEGQEPQHQDRQPGIESKMNPLPLSEDEDYRG. Position 49 to 73 (49 to 73) interacts with NADP(+); that stretch reads IITGGDSGIGRAAAIAFAKEGADIS. S181 serves as a coordination point for substrate. Residue Y194 is the Proton acceptor of the active site.

It belongs to the short-chain dehydrogenases/reductases (SDR) family.

This is an uncharacterized protein from Bacillus subtilis (strain 168).